The following is a 457-amino-acid chain: Siroheme synthase (457 aa).

The tract at residues 1 to 204 (MDHLPIFCQL…NDQKAITETT (204 aa)) is precorrin-2 dehydrogenase /sirohydrochlorin ferrochelatase. Residues 22 to 23 (DV) and 43 to 44 (LA) contribute to the NAD(+) site. Phosphoserine is present on Ser128. The uroporphyrinogen-III C-methyltransferase stretch occupies residues 216–457 (GEVVLVGAGP…RDKLNWFSNH (242 aa)). Pro225 lines the S-adenosyl-L-methionine pocket. Asp248 serves as the catalytic Proton acceptor. Catalysis depends on Lys270, which acts as the Proton donor. Residues 301-303 (GGD), Ile306, 331-332 (TA), Met382, and Gly411 contribute to the S-adenosyl-L-methionine site.

This sequence in the N-terminal section; belongs to the precorrin-2 dehydrogenase / sirohydrochlorin ferrochelatase family. In the C-terminal section; belongs to the precorrin methyltransferase family.

It carries out the reaction uroporphyrinogen III + 2 S-adenosyl-L-methionine = precorrin-2 + 2 S-adenosyl-L-homocysteine + H(+). It catalyses the reaction precorrin-2 + NAD(+) = sirohydrochlorin + NADH + 2 H(+). The catalysed reaction is siroheme + 2 H(+) = sirohydrochlorin + Fe(2+). The protein operates within cofactor biosynthesis; adenosylcobalamin biosynthesis; precorrin-2 from uroporphyrinogen III: step 1/1. Its pathway is cofactor biosynthesis; adenosylcobalamin biosynthesis; sirohydrochlorin from precorrin-2: step 1/1. It participates in porphyrin-containing compound metabolism; siroheme biosynthesis; precorrin-2 from uroporphyrinogen III: step 1/1. It functions in the pathway porphyrin-containing compound metabolism; siroheme biosynthesis; siroheme from sirohydrochlorin: step 1/1. The protein operates within porphyrin-containing compound metabolism; siroheme biosynthesis; sirohydrochlorin from precorrin-2: step 1/1. Multifunctional enzyme that catalyzes the SAM-dependent methylations of uroporphyrinogen III at position C-2 and C-7 to form precorrin-2 via precorrin-1. Then it catalyzes the NAD-dependent ring dehydrogenation of precorrin-2 to yield sirohydrochlorin. Finally, it catalyzes the ferrochelation of sirohydrochlorin to yield siroheme. In Escherichia coli O7:K1 (strain IAI39 / ExPEC), this protein is Siroheme synthase.